The sequence spans 124 residues: UPF0482 protein YpsIP31758_1865 (124 aa).

An N-terminal signal peptide occupies residues 1–32 (MMKINNLPRLIRTFLPATLLMLPLVWQTPALA). The tract at residues 47 to 68 (GGNNDPMSKEQARQSQQQWDET) is disordered.

The protein belongs to the UPF0482 family.

This is UPF0482 protein YpsIP31758_1865 from Yersinia pseudotuberculosis serotype O:1b (strain IP 31758).